Consider the following 219-residue polypeptide: MNLNNDHGPDPENILPIKGNRNLQFIKPTITNENILVGEYSYYDSKRGESFEDQVLYHYEVIGDKLIIGRFCSIGPGTTFIMNGANHRMDGSTYPFHLFRMGWEKYMPSLKDLPLKGDIEIGNDVWIGRDVTIMPGVKIGDGAIIAAEAVVTKNVAPYSIVGGNPLKFIRKRFSDGVIEEWLALQWWNLDMKIINENLPFIINGDIEMLKRKRKLLDDT.

Residue His87 is part of the active site.

Belongs to the transferase hexapeptide repeat family.

Its function is as follows. Inactivates the A compounds of virginiamycin-like antibiotics, thus providing resistance to these antibiotics. The sequence is that of Virginiamycin A acetyltransferase (vat) from Staphylococcus aureus.